We begin with the raw amino-acid sequence, 301 residues long: Vomeronasal type-1 receptor 4 (301 aa).

The Extracellular segment spans residues Met-1–Thr-15. The chain crosses the membrane as a helical span at residues Val-16–Gly-36. The Cytoplasmic segment spans residues Cys-37–His-48. The helical transmembrane segment at Leu-49–Phe-69 threads the bilayer. The Extracellular segment spans residues Arg-70 to Arg-88. The helical transmembrane segment at Val-89–Ile-107 threads the bilayer. At Thr-108–His-126 the chain is on the cytoplasmic side. Residues Val-127 to Ile-147 form a helical membrane-spanning segment. The Extracellular segment spans residues Tyr-148–Ser-185. N-linked (GlcNAc...) asparagine glycans are attached at residues Asn-154 and Asn-157. A helical transmembrane segment spans residues Phe-186–Leu-206. The Cytoplasmic segment spans residues His-207–Ser-234. Residues Ile-235 to Cys-255 form a helical membrane-spanning segment. At Met-256 to Ser-264 the chain is on the extracellular side. A helical transmembrane segment spans residues Leu-265–Leu-285. Residues Met-286 to Arg-301 are Cytoplasmic-facing.

The protein belongs to the G-protein coupled receptor 1 family.

It localises to the cell membrane. Putative pheromone receptor. This Pongo pygmaeus (Bornean orangutan) protein is Vomeronasal type-1 receptor 4 (VN1R4).